A 548-amino-acid chain; its full sequence is Probable bifunctional tRNA threonylcarbamoyladenosine biosynthesis protein (548 aa).

A kae1 region spans residues 1–338; sequence MRILGIEGTA…FRPDEVAVTW (338 aa). The Fe cation site is built by histidine 122 and histidine 126. Residues 143–147, aspartate 175, glycine 188, glutamate 192, and asparagine 271 contribute to the L-threonylcarbamoyladenylate site; that span reads NASGA. Aspartate 299 serves as a coordination point for Fe cation. The region spanning 349 to 548 is the Protein kinase domain; it reads RMGGDEVQGA…DDIEGRGRYQ (200 aa). ATP is bound by residues 355-362 and lysine 371; that span reads VQGAEATV. Residues 390–404 show a composition bias toward basic and acidic residues; it reads ERTRQEARLTSEARR. A disordered region spans residues 390 to 413; sequence ERTRQEARLTSEARRNGVPTPLVR. The Proton acceptor; for kinase activity role is filled by aspartate 460.

In the N-terminal section; belongs to the KAE1 / TsaD family. It in the C-terminal section; belongs to the protein kinase superfamily. Tyr protein kinase family. BUD32 subfamily. Component of the KEOPS complex that consists of Kae1, Bud32, Cgi121 and Pcc1; the whole complex dimerizes. It depends on Fe(2+) as a cofactor.

The protein resides in the cytoplasm. It carries out the reaction L-seryl-[protein] + ATP = O-phospho-L-seryl-[protein] + ADP + H(+). The enzyme catalyses L-threonyl-[protein] + ATP = O-phospho-L-threonyl-[protein] + ADP + H(+). It catalyses the reaction L-threonylcarbamoyladenylate + adenosine(37) in tRNA = N(6)-L-threonylcarbamoyladenosine(37) in tRNA + AMP + H(+). Required for the formation of a threonylcarbamoyl group on adenosine at position 37 (t(6)A37) in tRNAs that read codons beginning with adenine. Is a component of the KEOPS complex that is probably involved in the transfer of the threonylcarbamoyl moiety of threonylcarbamoyl-AMP (TC-AMP) to the N6 group of A37. The Kae1 domain likely plays a direct catalytic role in this reaction. The Bud32 domain probably displays kinase activity that regulates Kae1 function. The polypeptide is Probable bifunctional tRNA threonylcarbamoyladenosine biosynthesis protein (Haloarcula marismortui (strain ATCC 43049 / DSM 3752 / JCM 8966 / VKM B-1809) (Halobacterium marismortui)).